A 231-amino-acid polypeptide reads, in one-letter code: Large ribosomal subunit protein uL1 (231 aa).

The protein belongs to the universal ribosomal protein uL1 family. Part of the 50S ribosomal subunit.

Its function is as follows. Binds directly to 23S rRNA. The L1 stalk is quite mobile in the ribosome, and is involved in E site tRNA release. Protein L1 is also a translational repressor protein, it controls the translation of the L11 operon by binding to its mRNA. The sequence is that of Large ribosomal subunit protein uL1 from Pseudomonas syringae pv. tomato (strain ATCC BAA-871 / DC3000).